The primary structure comprises 62 residues: Keratin-associated protein 6-2 (62 aa).

The protein belongs to the KRTAP type 6 family. In terms of assembly, interacts with hair keratins.

Functionally, in the hair cortex, hair keratin intermediate filaments are embedded in an interfilamentous matrix, consisting of hair keratin-associated proteins (KRTAP), which are essential for the formation of a rigid and resistant hair shaft through their extensive disulfide bond cross-linking with abundant cysteine residues of hair keratins. The matrix proteins include the high-sulfur and high-glycine-tyrosine keratins. In Homo sapiens (Human), this protein is Keratin-associated protein 6-2 (KRTAP6-2).